Consider the following 275-residue polypeptide: Exosome complex component Rrp42 (275 aa).

Belongs to the RNase PH family. Rrp42 subfamily. In terms of assembly, component of the archaeal exosome complex. Forms a hexameric ring-like arrangement composed of 3 Rrp41-Rrp42 heterodimers. The hexameric ring associates with a trimer of Rrp4 and/or Csl4 subunits.

It is found in the cytoplasm. Its function is as follows. Non-catalytic component of the exosome, which is a complex involved in RNA degradation. Contributes to the structuring of the Rrp41 active site. This chain is Exosome complex component Rrp42, found in Saccharolobus islandicus (strain Y.N.15.51 / Yellowstone #2) (Sulfolobus islandicus).